Here is a 128-residue protein sequence, read N- to C-terminus: Fatty acid binding protein 1-B.1 (128 aa).

It belongs to the calycin superfamily. Fatty-acid binding protein (FABP) family. As to expression, expressed in the yolk syncytial layer (YSL) and subsequently in the intestinal bulb in developing embryos and larvae. In adults, expressed in the intestine.

It is found in the cytoplasm. Functionally, binds free fatty acids and their coenzyme A derivatives, bilirubin, and some other small molecules in the cytoplasm. May be involved in intracellular lipid transport. The chain is Fatty acid binding protein 1-B.1 (fabp1b.1) from Danio rerio (Zebrafish).